Consider the following 806-residue polypeptide: MSKLTTGSFSIEDLESVQITINNVIGAAKEAADEKAKDLGPMGPSAWPGLATYRDDWNLKLLDRYEPVITPMCDQCCYCTYGPCDLSNNKRGACGIDMLGHNGREFFLRVITGTACHAAHGRHLLDHLIEVFGEDLPLKLGQSDVLTPNITITTGQRPMTLGEIKPAMEHTEEQLTQLLATVHAGQESAEIDYDSKALFSGSLDHVGMEISDIVQIAALDFPKADPEAPLIEMGVGTIDKEKPFLCVIGHNVGGVTYMMDYMEEHDLTGKMELGGLCCTAIDLTRYKEADRRAPYTKVIGSMSQELKIIRSGLPDVIVVDEQCVRGDIVPEAQKLGIPVIASNAKIMYGLPNRDEQDVDATIEELKSGAIPGAVILDYDKLGEISVRLTQEMHPLREAAGLRKIASDEQMKEWVDKCADCGSCYLVCPEELEIPEAMKHAKEGDYSYLVDLHDQCIGCRRCEQVCKKEIPILSVIEKASQKVIAEEKGWMRAGRGQVSDAEIRAEGLNLVMGTTPGIIAIIGCPNYGDGAKSVYYIAEEFLKRNFIVVGTGCGAMDMGMYKDENGQTLYERFPGGFQSGGLVNIGSCVSNAHITGAAQKVAGIFGGRTMEGNLAEIADYVLNRVGACGLAWGAFSQKASSIGTGCNIYGIPAVLGPHSSKYRRALISKNYDDEKWKVYDARSGEEMAIPPAPEFLLITAETWQEAIPMMAKACIRPSDNSMGRSIKLTHWMELHQKYIGGMPEDWWKFIRTEADLPLAKRAELMKKLEEEHGWEIDWKRKKIISGPKIKFDVSAQPTNLKRLCKGA.

[4Fe-4S] cluster contacts are provided by cysteine 73, cysteine 76, cysteine 77, cysteine 79, cysteine 84, and cysteine 94. Histidine 117 is a CO binding site. Residues histidine 250, cysteine 278, and cysteine 323 each contribute to the [Ni-4Fe-4S] cluster site. 4Fe-4S ferredoxin-type domains lie at 407 to 436 (DEQM…IPEA) and 445 to 475 (YSYL…LSVI). Positions 417, 420, 423, 427, 455, 458, 461, and 465 each coordinate [4Fe-4S] cluster. Residues cysteine 523, cysteine 552, and cysteine 587 each contribute to the [Ni-4Fe-4S] cluster site.

Belongs to the Ni-containing carbon monoxide dehydrogenase family. As to quaternary structure, heterotetramer of two alpha and two epsilon subunits. The ACDS complex is made up of alpha, epsilon, beta, gamma and delta subunits with a probable stoichiometry of (alpha(2)epsilon(2))(4)-beta(8)-(gamma(1)delta(1))(8). [4Fe-4S] cluster serves as cofactor. It depends on [Ni-4Fe-4S] cluster as a cofactor.

The catalysed reaction is CO + 2 oxidized [2Fe-2S]-[ferredoxin] + H2O = 2 reduced [2Fe-2S]-[ferredoxin] + CO2 + 2 H(+). It participates in one-carbon metabolism; methanogenesis from acetate. Part of the ACDS complex that catalyzes the reversible cleavage of acetyl-CoA, allowing growth on acetate as sole source of carbon and energy. The alpha-epsilon subcomponent functions as a carbon monoxide dehydrogenase. The protein is Acetyl-CoA decarbonylase/synthase complex subunit alpha 1 of Methanosarcina thermophila.